A 215-amino-acid chain; its full sequence is S-crystallin 3 (215 aa).

The GST N-terminal domain maps to 2-80 (PSYTLHYFNH…YLAREFGYHG (79 aa)). Residues 82–215 (SNMEMARVDF…YLKKRCRTDF (134 aa)) form the GST C-terminal domain.

It belongs to the GST superfamily. Lens.

S-crystallins are structural components of squids and octopi eye lens. Contains relatively little if any GST activity. This is S-crystallin 3 from Enteroctopus dofleini (North Pacific giant octopus).